A 128-amino-acid polypeptide reads, in one-letter code: uncharacterized protein (128 aa).

The chain crosses the membrane as a helical span at residues 8–28 (YQAIYLIFAGFTVFGLLLHFY).

Its subcellular location is the membrane. This is an uncharacterized protein from Haemophilus influenzae (strain ATCC 51907 / DSM 11121 / KW20 / Rd).